The primary structure comprises 940 residues: Translation initiation factor IF-2 (940 aa).

Disordered regions lie at residues 116-137 (PEQE…SSDT), 151-196 (EVEA…EQRS), 210-294 (AVRK…VKKV), and 318-346 (HSAP…VANR). Polar residues predominate over residues 121–137 (LESTSVAEIPESVSSDT). Residues 159-180 (PEPEVEATPEPEVEDVVAEEAE) show a composition bias toward acidic residues. Over residues 181-193 (PAAAEPAPAPVVE) the composition is skewed to low complexity. Residues 213–239 (KKAEEEAEVARRKADAEKAEAAAKQKA) are compositionally biased toward basic and acidic residues. A compositionally biased stretch (basic residues) spans 282 to 294 (KHNKKAGKAVKKV). Over residues 326–337 (GGQNNNSSNSGS) the composition is skewed to low complexity. Positions 441 to 610 (ARAPVVTVMG…ALQAELLELS (170 aa)) constitute a tr-type G domain. Residues 450-457 (GHVDHGKT) form a G1 region. Residue 450 to 457 (GHVDHGKT) coordinates GTP. The tract at residues 475–479 (GITQH) is G2. Residues 496–499 (DTPG) form a G3 region. GTP-binding positions include 496-500 (DTPGH) and 550-553 (NKID). The tract at residues 550–553 (NKID) is G4. The interval 586-588 (SAQ) is G5.

It belongs to the TRAFAC class translation factor GTPase superfamily. Classic translation factor GTPase family. IF-2 subfamily.

The protein resides in the cytoplasm. In terms of biological role, one of the essential components for the initiation of protein synthesis. Protects formylmethionyl-tRNA from spontaneous hydrolysis and promotes its binding to the 30S ribosomal subunits. Also involved in the hydrolysis of GTP during the formation of the 70S ribosomal complex. This Teredinibacter turnerae (strain ATCC 39867 / T7901) protein is Translation initiation factor IF-2.